The chain runs to 299 residues: tRNA dimethylallyltransferase (299 aa).

11-18 (GPTAVGKT) lines the ATP pocket. 13-18 (TAVGKT) is a substrate binding site. The tract at residues 36 to 39 (DSQQ) is interaction with substrate tRNA.

Belongs to the IPP transferase family. Monomer. It depends on Mg(2+) as a cofactor.

It carries out the reaction adenosine(37) in tRNA + dimethylallyl diphosphate = N(6)-dimethylallyladenosine(37) in tRNA + diphosphate. Catalyzes the transfer of a dimethylallyl group onto the adenine at position 37 in tRNAs that read codons beginning with uridine, leading to the formation of N6-(dimethylallyl)adenosine (i(6)A). This is tRNA dimethylallyltransferase from Streptococcus pyogenes serotype M6 (strain ATCC BAA-946 / MGAS10394).